Here is a 432-residue protein sequence, read N- to C-terminus: Acyl-CoA dehydrogenase AFT10-1 (432 aa).

The protein belongs to the acyl-CoA dehydrogenase family. The cofactor is FAD.

It functions in the pathway mycotoxin biosynthesis. Functionally, acyl-CoA dehydrogenase; part of the gene clusters that mediate the biosynthesis of the host-selective toxins (HSTs) AF-toxins responsible for Alternaria black spot of strawberry disease by the strawberry pathotype. AF-toxin I and III are valine derivatives of 2,3-dyhydroxy-isovaleric acid and 2-hydroxy-isovaleric acid respectively, while AF II is an isoleucine derivative of 2-hydroxy-valeric acid. These derivatives are bound to a 9,10-epoxy-8-hydroxy-9-methyl-decatrienoic acid (EDA) moiety. On cellular level, AF-toxins affect plasma membrane of susceptible cells and cause a sudden increase in loss of K(+) after a few minutes of toxin treatment. The aldo-keto reductase AFTS1 catalyzes the conversion of 2-keto-isovaleric acid (2-KIV) to 2-hydroxy-isovaleric acid (2-HIV) by reduction of its ketone to an alcohol. The acyl-CoA ligase AFT1, the hydrolase AFT2 and the enoyl-CoA hydratases AFT3 and AFT6, but also the polyketide synthase AFT9, the acyl-CoA dehydrogenase AFT10, the cytochrome P450 monooxygenase AFT11 and the oxidoreductase AFT12 are all involved in the biosynthesis of the AK-, AF- and ACT-toxin common EDA structural moiety. The exact function of each enzyme, and of additional enzymes identified within the AF-toxin clusters have still to be determined. The protein is Acyl-CoA dehydrogenase AFT10-1 of Alternaria alternata (Alternaria rot fungus).